Here is a 242-residue protein sequence, read N- to C-terminus: MFHKLLNKSEILAYDKKYVNNYIINVENLSFFYSKEKVIDDISFQVKFGEIVTILGPNGGGKTTLIRILVGIYRNYIGVIKYAKNFIIGYLPQHFSVNSLIPMTVKYFLNSSYTKSKRKLKLSDVLKDINIEKILDRQMSEISHGELQLVLLARCLMLNPDIIILDEPVSCMDVNAKDSFYKLINKLISIYNLSVIMTSHDLHFVMSNSYRVICINRSIYCEGSPSEIVKNEKFLKMFSSYA.

Residues 24–241 enclose the ABC transporter domain; sequence INVENLSFFY…EKFLKMFSSY (218 aa). ATP is bound at residue 56–63; that stretch reads GPNGGGKT.

Belongs to the ABC transporter superfamily. Zinc importer (TC 3.A.1.15.5) family. The complex is composed of two ATP-binding proteins (ZnuC), two transmembrane proteins (ZnuB) and a solute-binding protein (ZnuA).

The protein localises to the cell inner membrane. The enzyme catalyses Zn(2+)(out) + ATP(in) + H2O(in) = Zn(2+)(in) + ADP(in) + phosphate(in) + H(+)(in). In terms of biological role, part of the ABC transporter complex ZnuABC involved in zinc import. Responsible for energy coupling to the transport system. The polypeptide is Zinc import ATP-binding protein ZnuC (Ehrlichia chaffeensis (strain ATCC CRL-10679 / Arkansas)).